A 415-amino-acid chain; its full sequence is DNA double-strand break repair protein Mre11 (415 aa).

Positions 10, 12, 51, and 86 each coordinate Mn(2+). His-87 serves as the catalytic Proton donor. Mn(2+)-binding residues include His-174, His-208, and His-210.

It belongs to the MRE11/RAD32 family. In terms of assembly, homodimer. Forms a heterotetramer composed of two Mre11 subunits and two Rad50 subunits. Mn(2+) is required as a cofactor.

Nuclease activity is regulated by Rad50. Functionally, part of the Rad50/Mre11 complex, which is involved in the early steps of DNA double-strand break (DSB) repair. The complex may facilitate opening of the processed DNA ends to aid in the recruitment of HerA and NurA. Mre11 binds to DSB ends and has both double-stranded 3'-5' exonuclease activity and single-stranded endonuclease activity. The chain is DNA double-strand break repair protein Mre11 from Pyrococcus abyssi (strain GE5 / Orsay).